The primary structure comprises 473 residues: Bifunctional protein HldE (473 aa).

A ribokinase region spans residues 1–317; sequence MKLSMPRFDQ…RRAVQREQGS (317 aa). 194–197 contacts ATP; sequence NLSE. Asp263 is a catalytic residue. Residues 343–473 are cytidylyltransferase; it reads FTNGCFDILH…TAIVEKIRQR (131 aa).

It in the N-terminal section; belongs to the carbohydrate kinase PfkB family. The protein in the C-terminal section; belongs to the cytidylyltransferase family. As to quaternary structure, homodimer.

It catalyses the reaction D-glycero-beta-D-manno-heptose 7-phosphate + ATP = D-glycero-beta-D-manno-heptose 1,7-bisphosphate + ADP + H(+). The catalysed reaction is D-glycero-beta-D-manno-heptose 1-phosphate + ATP + H(+) = ADP-D-glycero-beta-D-manno-heptose + diphosphate. The protein operates within nucleotide-sugar biosynthesis; ADP-L-glycero-beta-D-manno-heptose biosynthesis; ADP-L-glycero-beta-D-manno-heptose from D-glycero-beta-D-manno-heptose 7-phosphate: step 1/4. It participates in nucleotide-sugar biosynthesis; ADP-L-glycero-beta-D-manno-heptose biosynthesis; ADP-L-glycero-beta-D-manno-heptose from D-glycero-beta-D-manno-heptose 7-phosphate: step 3/4. Catalyzes the phosphorylation of D-glycero-D-manno-heptose 7-phosphate at the C-1 position to selectively form D-glycero-beta-D-manno-heptose-1,7-bisphosphate. Its function is as follows. Catalyzes the ADP transfer from ATP to D-glycero-beta-D-manno-heptose 1-phosphate, yielding ADP-D-glycero-beta-D-manno-heptose. In Pseudomonas aeruginosa (strain LESB58), this protein is Bifunctional protein HldE.